We begin with the raw amino-acid sequence, 345 residues long: UDP-3-O-acylglucosamine N-acyltransferase (345 aa).

H248 (proton acceptor) is an active-site residue.

Belongs to the transferase hexapeptide repeat family. LpxD subfamily. In terms of assembly, homotrimer.

It carries out the reaction a UDP-3-O-[(3R)-3-hydroxyacyl]-alpha-D-glucosamine + a (3R)-hydroxyacyl-[ACP] = a UDP-2-N,3-O-bis[(3R)-3-hydroxyacyl]-alpha-D-glucosamine + holo-[ACP] + H(+). It participates in bacterial outer membrane biogenesis; LPS lipid A biosynthesis. Functionally, catalyzes the N-acylation of UDP-3-O-acylglucosamine using 3-hydroxyacyl-ACP as the acyl donor. Is involved in the biosynthesis of lipid A, a phosphorylated glycolipid that anchors the lipopolysaccharide to the outer membrane of the cell. This chain is UDP-3-O-acylglucosamine N-acyltransferase, found in Prochlorococcus marinus (strain SARG / CCMP1375 / SS120).